Here is a 426-residue protein sequence, read N- to C-terminus: Gamma-glutamyl phosphate reductase (426 aa).

The protein belongs to the gamma-glutamyl phosphate reductase family.

The protein localises to the cytoplasm. It catalyses the reaction L-glutamate 5-semialdehyde + phosphate + NADP(+) = L-glutamyl 5-phosphate + NADPH + H(+). It participates in amino-acid biosynthesis; L-proline biosynthesis; L-glutamate 5-semialdehyde from L-glutamate: step 2/2. Catalyzes the NADPH-dependent reduction of L-glutamate 5-phosphate into L-glutamate 5-semialdehyde and phosphate. The product spontaneously undergoes cyclization to form 1-pyrroline-5-carboxylate. The protein is Gamma-glutamyl phosphate reductase of Cupriavidus metallidurans (strain ATCC 43123 / DSM 2839 / NBRC 102507 / CH34) (Ralstonia metallidurans).